The primary structure comprises 249 residues: Triosephosphate isomerase (249 aa).

The substrate site is built by Asn12 and Lys14. Residue Lys14 is modified to N6-acetyllysine. The residue at position 68 (Tyr68) is a 3'-nitrotyrosine. At Ser80 the chain carries Phosphoserine. Residue His96 is the Electrophile of the active site. Residue Ser106 is modified to Phosphoserine. Lys142 participates in a covalent cross-link: Glycyl lysine isopeptide (Lys-Gly) (interchain with G-Cter in SUMO1). An N6-succinyllysine modification is found at Lys149. Lys156 bears the N6-acetyllysine; alternate mark. An N6-succinyllysine; alternate modification is found at Lys156. Ser159 carries the phosphoserine modification. Glu166 serves as the catalytic Proton acceptor. Residue Thr173 is modified to Phosphothreonine. N6-acetyllysine; alternate is present on Lys194. Residue Lys194 is modified to N6-succinyllysine; alternate. Lys194 carries the post-translational modification N6-methyllysine; alternate. Ser198 is modified (phosphoserine). Position 209 is a 3'-nitrotyrosine (Tyr209). Ser212 is modified (phosphoserine). Thr214 bears the Phosphothreonine mark. Ser223 is modified (phosphoserine). N6-acetyllysine is present on Lys238.

The protein belongs to the triosephosphate isomerase family. In terms of assembly, homodimer.

The protein localises to the cytoplasm. The catalysed reaction is dihydroxyacetone phosphate = methylglyoxal + phosphate. It catalyses the reaction D-glyceraldehyde 3-phosphate = dihydroxyacetone phosphate. It functions in the pathway carbohydrate degradation; glycolysis; D-glyceraldehyde 3-phosphate from glycerone phosphate: step 1/1. Its pathway is carbohydrate biosynthesis; gluconeogenesis. Functionally, triosephosphate isomerase is an extremely efficient metabolic enzyme that catalyzes the interconversion between dihydroxyacetone phosphate (DHAP) and D-glyceraldehyde-3-phosphate (G3P) in glycolysis and gluconeogenesis. It is also responsible for the non-negligible production of methylglyoxal a reactive cytotoxic side-product that modifies and can alter proteins, DNA and lipids. In Pongo abelii (Sumatran orangutan), this protein is Triosephosphate isomerase (TPI1).